A 351-amino-acid polypeptide reads, in one-letter code: S-adenosylmethionine:tRNA ribosyltransferase-isomerase (351 aa).

This sequence belongs to the QueA family. Monomer.

It is found in the cytoplasm. The catalysed reaction is 7-aminomethyl-7-carbaguanosine(34) in tRNA + S-adenosyl-L-methionine = epoxyqueuosine(34) in tRNA + adenine + L-methionine + 2 H(+). Its pathway is tRNA modification; tRNA-queuosine biosynthesis. In terms of biological role, transfers and isomerizes the ribose moiety from AdoMet to the 7-aminomethyl group of 7-deazaguanine (preQ1-tRNA) to give epoxyqueuosine (oQ-tRNA). The chain is S-adenosylmethionine:tRNA ribosyltransferase-isomerase from Hyphomonas neptunium (strain ATCC 15444).